A 1114-amino-acid chain; its full sequence is Extracellular sulfatase SULF-1 homolog (1114 aa).

A signal peptide spans 1–25 (MMRHSSLRLIIGGLILLLFVLNVFS). 3 residues coordinate Ca(2+): D62, D63, and C98. C98 (nucleophile) is an active-site residue. C98 carries the 3-oxoalanine (Cys) modification. N-linked (GlcNAc...) asparagine glycans are attached at residues N122, N159, N181, N208, and N251. D327 and H328 together coordinate Ca(2+). N447 is a glycosylation site (N-linked (GlcNAc...) asparagine). Positions 466-479 (SSSSTAATLMSSTA) are enriched in low complexity. The interval 466 to 504 (SSSSTAATLMSSTAQQPEDGEEEVETDNEEDDVDGDGAM) is disordered. A compositionally biased stretch (acidic residues) spans 483–502 (EDGEEEVETDNEEDDVDGDG). 3 N-linked (GlcNAc...) asparagine glycosylation sites follow: N683, N713, and N743. The disordered stretch occupies residues 781-812 (KQLRESNKQALAAGRRNDNRRRNDQSVLDSGA). Residues 795-804 (RRNDNRRRND) are compositionally biased toward basic and acidic residues. An N-linked (GlcNAc...) asparagine glycan is attached at N817. Over residues 876-895 (ADSKEMAREARRKLKEERQR) the composition is skewed to basic and acidic residues. A disordered region spans residues 876 to 901 (ADSKEMAREARRKLKEERQRKKERKR). 3 N-linked (GlcNAc...) asparagine glycosylation sites follow: N945, N955, and N974. A disordered region spans residues 1073-1114 (LSKYNRLTGSQQSHMKRRPWKQTPLQQSPRFLRTHSVTPAQA). Positions 1095–1114 (TPLQQSPRFLRTHSVTPAQA) are enriched in polar residues.

Belongs to the sulfatase family. Ca(2+) is required as a cofactor. The conversion to 3-oxoalanine (also known as C-formylglycine, FGly), of a serine or cysteine residue in prokaryotes and of a cysteine residue in eukaryotes, is critical for catalytic activity.

It is found in the endoplasmic reticulum. It localises to the golgi apparatus. The protein resides in the golgi stack. The protein localises to the cell surface. The polypeptide is Extracellular sulfatase SULF-1 homolog (Sulf1) (Drosophila melanogaster (Fruit fly)).